A 240-amino-acid polypeptide reads, in one-letter code: Prolactin-8A6 (240 aa).

The signal sequence occupies residues methionine 1–serine 30. Cystine bridges form between cysteine 34–cysteine 41, cysteine 101–cysteine 216, and cysteine 233–cysteine 240. A glycan (N-linked (GlcNAc...) asparagine) is linked at asparagine 212.

The protein belongs to the somatotropin/prolactin family. In terms of tissue distribution, expressed specifically in the spongiotrophoblast and trophoblast giant cells from the junctional zone of the chorioallantoic placenta.

It localises to the secreted. The protein is Prolactin-8A6 (Prl8a6) of Mus musculus (Mouse).